The primary structure comprises 501 residues: Phenylalanine--tRNA ligase alpha subunit (501 aa).

T340 and F423 together coordinate L-phenylalanine. Residue E425 participates in Mg(2+) binding. F448 provides a ligand contact to L-phenylalanine.

It belongs to the class-II aminoacyl-tRNA synthetase family. Phe-tRNA synthetase alpha subunit type 2 subfamily. As to quaternary structure, tetramer of two alpha and two beta subunits. It depends on Mg(2+) as a cofactor.

It localises to the cytoplasm. The enzyme catalyses tRNA(Phe) + L-phenylalanine + ATP = L-phenylalanyl-tRNA(Phe) + AMP + diphosphate + H(+). This chain is Phenylalanine--tRNA ligase alpha subunit, found in Methanococcus maripaludis (strain C5 / ATCC BAA-1333).